A 67-amino-acid polypeptide reads, in one-letter code: Large ribosomal subunit protein bL35 (67 aa).

The disordered stretch occupies residues 22-45 (GKIKRWKSGGAHYNTKKSSKRKRH). The span at 35–45 (NTKKSSKRKRH) shows a compositional bias: basic residues.

The protein belongs to the bacterial ribosomal protein bL35 family.

The chain is Large ribosomal subunit protein bL35 from Aquifex aeolicus (strain VF5).